Consider the following 206-residue polypeptide: MCIDLIRFELQQAAQILNQFMSDDKNLDPVRQAAFLLVDAFKAGKKVISCGNGGSHCDAMHFAEELTGRYRENRPGYPAIAISDVSHISCVGNDFGYEHVFSRYVDSVGCEGDVLFALSTSGNSKNIIKAIQSARQKKMKVIILTGQMGGAMSNLADVKICVPHQGYADRIQEIHIKIIHILILLIEQKMDINNESLTFLKEEGHV.

Residues 37 to 195 enclose the SIS domain; that stretch reads LVDAFKAGKK…IEQKMDINNE (159 aa). 52-54 contributes to the substrate binding site; that stretch reads NGG. Residues His61 and Glu65 each contribute to the Zn(2+) site. Substrate is bound by residues Glu65, 93–94, 119–121, Ser124, and Gln172; these read ND and STS. Zn(2+) is bound by residues Gln172 and His180.

Belongs to the SIS family. GmhA subfamily. In terms of assembly, homotetramer. It depends on Zn(2+) as a cofactor.

The protein localises to the cytoplasm. The enzyme catalyses 2 D-sedoheptulose 7-phosphate = D-glycero-alpha-D-manno-heptose 7-phosphate + D-glycero-beta-D-manno-heptose 7-phosphate. It participates in carbohydrate biosynthesis; D-glycero-D-manno-heptose 7-phosphate biosynthesis; D-glycero-alpha-D-manno-heptose 7-phosphate and D-glycero-beta-D-manno-heptose 7-phosphate from sedoheptulose 7-phosphate: step 1/1. Functionally, catalyzes the isomerization of sedoheptulose 7-phosphate in D-glycero-D-manno-heptose 7-phosphate. The sequence is that of Phosphoheptose isomerase from Hamiltonella defensa subsp. Acyrthosiphon pisum (strain 5AT).